A 64-amino-acid polypeptide reads, in one-letter code: Large ribosomal subunit protein bL35 (64 aa).

The interval 18-39 (GSGLVKHYPSNKHHKNTHKKEN) is disordered. The span at 26 to 39 (PSNKHHKNTHKKEN) shows a compositional bias: basic residues.

Belongs to the bacterial ribosomal protein bL35 family.

The polypeptide is Large ribosomal subunit protein bL35 (Symbiobacterium thermophilum (strain DSM 24528 / JCM 14929 / IAM 14863 / T)).